We begin with the raw amino-acid sequence, 275 residues long: Light-independent protochlorophyllide reductase iron-sulfur ATP-binding protein (275 aa).

ATP-binding positions include 12 to 17 (GIGKST) and Lys-41. Mg(2+) is bound at residue Ser-16. [4Fe-4S] cluster-binding residues include Cys-97 and Cys-131. Residue 182 to 183 (NR) coordinates ATP.

Belongs to the NifH/BchL/ChlL family. Homodimer. Protochlorophyllide reductase is composed of three subunits; BchL, BchN and BchB. [4Fe-4S] cluster serves as cofactor.

The catalysed reaction is chlorophyllide a + oxidized 2[4Fe-4S]-[ferredoxin] + 2 ADP + 2 phosphate = protochlorophyllide a + reduced 2[4Fe-4S]-[ferredoxin] + 2 ATP + 2 H2O. It participates in porphyrin-containing compound metabolism; bacteriochlorophyll biosynthesis (light-independent). In terms of biological role, component of the dark-operative protochlorophyllide reductase (DPOR) that uses Mg-ATP and reduced ferredoxin to reduce ring D of protochlorophyllide (Pchlide) to form chlorophyllide a (Chlide). This reaction is light-independent. The L component serves as a unique electron donor to the NB-component of the complex, and binds Mg-ATP. In Pelodictyon phaeoclathratiforme (strain DSM 5477 / BU-1), this protein is Light-independent protochlorophyllide reductase iron-sulfur ATP-binding protein.